The primary structure comprises 262 residues: Phosphatidylserine decarboxylase proenzyme (262 aa).

Active-site charge relay system; for autoendoproteolytic cleavage activity residues include Asp86, His142, and Ser226. The Schiff-base intermediate with substrate; via pyruvic acid; for decarboxylase activity role is filled by Ser226. At Ser226 the chain carries Pyruvic acid (Ser); by autocatalysis.

Belongs to the phosphatidylserine decarboxylase family. PSD-B subfamily. Prokaryotic type I sub-subfamily. As to quaternary structure, heterodimer of a large membrane-associated beta subunit and a small pyruvoyl-containing alpha subunit. The cofactor is pyruvate. Post-translationally, is synthesized initially as an inactive proenzyme. Formation of the active enzyme involves a self-maturation process in which the active site pyruvoyl group is generated from an internal serine residue via an autocatalytic post-translational modification. Two non-identical subunits are generated from the proenzyme in this reaction, and the pyruvate is formed at the N-terminus of the alpha chain, which is derived from the carboxyl end of the proenzyme. The autoendoproteolytic cleavage occurs by a canonical serine protease mechanism, in which the side chain hydroxyl group of the serine supplies its oxygen atom to form the C-terminus of the beta chain, while the remainder of the serine residue undergoes an oxidative deamination to produce ammonia and the pyruvoyl prosthetic group on the alpha chain. During this reaction, the Ser that is part of the protease active site of the proenzyme becomes the pyruvoyl prosthetic group, which constitutes an essential element of the active site of the mature decarboxylase.

The protein localises to the cell membrane. The enzyme catalyses a 1,2-diacyl-sn-glycero-3-phospho-L-serine + H(+) = a 1,2-diacyl-sn-glycero-3-phosphoethanolamine + CO2. Its pathway is phospholipid metabolism; phosphatidylethanolamine biosynthesis; phosphatidylethanolamine from CDP-diacylglycerol: step 2/2. In terms of biological role, catalyzes the formation of phosphatidylethanolamine (PtdEtn) from phosphatidylserine (PtdSer). The protein is Phosphatidylserine decarboxylase proenzyme of Bacillus cereus (strain ATCC 10987 / NRS 248).